The chain runs to 145 residues: Hemoglobin subunit beta (145 aa).

In terms of domain architecture, Globin spans 1–145 (MLTAEEKAAV…VANALAHRYH (145 aa)). A Phosphothreonine modification is found at Thr-11. N6-acetyllysine is present on Lys-58. His-62 serves as a coordination point for heme b. Position 81 is an N6-acetyllysine (Lys-81). His-91 serves as a coordination point for heme b. Cys-92 is subject to S-nitrosocysteine.

The protein belongs to the globin family. As to quaternary structure, heterotetramer of two alpha chains and two beta chains. As to expression, red blood cells.

Involved in oxygen transport from the lung to the various peripheral tissues. This Ovis aries musimon (Mouflon) protein is Hemoglobin subunit beta (HBB).